Consider the following 389-residue polypeptide: Glutamate 5-kinase (389 aa).

Position 16 (lysine 16) interacts with ATP. Substrate is bound by residues serine 56, aspartate 143, and asparagine 155. ATP is bound at residue 175-176 (SD). Positions 281–358 (AGGLHVDDGA…AEIEAILGYP (78 aa)) constitute a PUA domain.

It belongs to the glutamate 5-kinase family.

The protein resides in the cytoplasm. The enzyme catalyses L-glutamate + ATP = L-glutamyl 5-phosphate + ADP. It functions in the pathway amino-acid biosynthesis; L-proline biosynthesis; L-glutamate 5-semialdehyde from L-glutamate: step 1/2. Its function is as follows. Catalyzes the transfer of a phosphate group to glutamate to form L-glutamate 5-phosphate. The polypeptide is Glutamate 5-kinase (Rhizobium leguminosarum bv. trifolii (strain WSM2304)).